The sequence spans 89 residues: UPF0237 protein Cgl1544/cg1742 (89 aa).

The ACT domain occupies 4-82; the sequence is IMTVTGQDHT…LVIRIQSEAL (79 aa).

It belongs to the UPF0237 family.

The chain is UPF0237 protein Cgl1544/cg1742 from Corynebacterium glutamicum (strain ATCC 13032 / DSM 20300 / JCM 1318 / BCRC 11384 / CCUG 27702 / LMG 3730 / NBRC 12168 / NCIMB 10025 / NRRL B-2784 / 534).